Reading from the N-terminus, the 300-residue chain is Vetispiradiene synthase 2 (300 aa).

5 residues coordinate Mg(2+): Asp-54, Asp-58, Asp-197, Thr-201, and Glu-205. A DDXXD motif motif is present at residues 54 to 58 (DDTFD).

It belongs to the terpene synthase family. Tpsa subfamily. It depends on Mg(2+) as a cofactor.

The protein resides in the cytoplasm. The enzyme catalyses (2E,6E)-farnesyl diphosphate = (-)-vetispiradiene + diphosphate. It participates in secondary metabolite biosynthesis; terpenoid biosynthesis. Functionally, sesquiterpene synthase that catalyzes the formation of vetispiradiene from trans,trans-farnesyl diphosphate. The initial internal cyclization produces the monocyclic intermediate germacrene A. This chain is Vetispiradiene synthase 2, found in Hyoscyamus muticus (Egyptian henbane).